The sequence spans 327 residues: Annexin A8 (327 aa).

4 Annexin repeats span residues 21–92 (FNPD…ALMY), 93–164 (PPYR…CLLQ), 177–249 (GLAL…TVVK), and 253–324 (NLHS…SLVG). 4 residues coordinate Ca(2+): Met-266, Gly-268, Gly-270, and Asp-310.

The protein belongs to the annexin family.

Functionally, this protein is an anticoagulant protein that acts as an indirect inhibitor of the thromboplastin-specific complex, which is involved in the blood coagulation cascade. This is Annexin A8 from Homo sapiens (Human).